The sequence spans 444 residues: Ribosomal protein uS12 methylthiotransferase RimO (444 aa).

An MTTase N-terminal domain is found at 6–116; that stretch reads PNIGFVSLGC…VMEHVHKYVP (111 aa). Positions 15, 51, 80, 148, 152, and 155 each coordinate [4Fe-4S] cluster. Residues 134–375 enclose the Radical SAM core domain; sequence LTPKHYAYLK…MQLQQEISAA (242 aa). The TRAM domain maps to 378-444; it reads QQKIGKTWKV…ADEYDLWGTC (67 aa).

Belongs to the methylthiotransferase family. RimO subfamily. [4Fe-4S] cluster is required as a cofactor.

It is found in the cytoplasm. It carries out the reaction L-aspartate(89)-[ribosomal protein uS12]-hydrogen + (sulfur carrier)-SH + AH2 + 2 S-adenosyl-L-methionine = 3-methylsulfanyl-L-aspartate(89)-[ribosomal protein uS12]-hydrogen + (sulfur carrier)-H + 5'-deoxyadenosine + L-methionine + A + S-adenosyl-L-homocysteine + 2 H(+). Functionally, catalyzes the methylthiolation of an aspartic acid residue of ribosomal protein uS12. The chain is Ribosomal protein uS12 methylthiotransferase RimO from Actinobacillus succinogenes (strain ATCC 55618 / DSM 22257 / CCUG 43843 / 130Z).